A 480-amino-acid chain; its full sequence is Glutamate--tRNA ligase (480 aa).

The 'HIGH' region motif lies at 8–18 (PSPTGPLHIGG). Positions 249–253 (KMSKR) match the 'KMSKS' region motif. Lys-252 is an ATP binding site.

This sequence belongs to the class-I aminoacyl-tRNA synthetase family. Glutamate--tRNA ligase type 1 subfamily. As to quaternary structure, monomer.

The protein localises to the cytoplasm. It catalyses the reaction tRNA(Glu) + L-glutamate + ATP = L-glutamyl-tRNA(Glu) + AMP + diphosphate. Its function is as follows. Catalyzes the attachment of glutamate to tRNA(Glu) in a two-step reaction: glutamate is first activated by ATP to form Glu-AMP and then transferred to the acceptor end of tRNA(Glu). This Carboxydothermus hydrogenoformans (strain ATCC BAA-161 / DSM 6008 / Z-2901) protein is Glutamate--tRNA ligase.